The chain runs to 120 residues: Large ribosomal subunit protein uL18c (120 aa).

It belongs to the universal ribosomal protein uL18 family. In terms of assembly, part of the 50S ribosomal subunit; contacts the 5S rRNA.

It is found in the plastid. The protein resides in the chloroplast. Its function is as follows. Binds 5S rRNA, forms part of the central protuberance of the 50S subunit. The protein is Large ribosomal subunit protein uL18c (rpl18) of Pyropia yezoensis (Susabi-nori).